Here is a 1295-residue protein sequence, read N- to C-terminus: Phosphoribosylformylglycinamidine synthase (1295 aa).

Residues 302–327 form a disordered region; the sequence is APFSGAATGSGGEIRDEGATGRGSKP. ATP-binding positions include 306 to 317 and Ala677; that span reads GAATGSGGEIRD. Mg(2+) is bound by residues Asp678, Glu717, Asn721, and Asp884. An ATP-binding site is contributed by Ser886. The region spanning 1042–1295 is the Glutamine amidotransferase type-1 domain; the sequence is MAILREQGVN…MFRNARVYLG (254 aa). Catalysis depends on Cys1135, which acts as the Nucleophile. Residues His1260 and Glu1262 contribute to the active site.

It in the N-terminal section; belongs to the FGAMS family. In terms of assembly, monomer.

The protein resides in the cytoplasm. The catalysed reaction is N(2)-formyl-N(1)-(5-phospho-beta-D-ribosyl)glycinamide + L-glutamine + ATP + H2O = 2-formamido-N(1)-(5-O-phospho-beta-D-ribosyl)acetamidine + L-glutamate + ADP + phosphate + H(+). It functions in the pathway purine metabolism; IMP biosynthesis via de novo pathway; 5-amino-1-(5-phospho-D-ribosyl)imidazole from N(2)-formyl-N(1)-(5-phospho-D-ribosyl)glycinamide: step 1/2. Phosphoribosylformylglycinamidine synthase involved in the purines biosynthetic pathway. Catalyzes the ATP-dependent conversion of formylglycinamide ribonucleotide (FGAR) and glutamine to yield formylglycinamidine ribonucleotide (FGAM) and glutamate. The protein is Phosphoribosylformylglycinamidine synthase of Pseudoalteromonas atlantica (strain T6c / ATCC BAA-1087).